We begin with the raw amino-acid sequence, 1886 residues long: Nuclear pore membrane glycoprotein 210 (1886 aa).

The first 25 residues, 1–25 (MARASLIQPGLWALLLLQAVGPAVA), serve as a signal peptide directing secretion. Residues 26 to 1805 (AKLNIPKVLL…GASLLSHFLD (1780 aa)) lie on the Perinuclear space side of the membrane. 4 N-linked (GlcNAc...) asparagine glycosylation sites follow: asparagine 337, asparagine 484, asparagine 681, and asparagine 1039. Residues 1078–1151 (FPPFRLIPRK…VQAVDAETGK (74 aa)) form the BIG2 domain. A helical membrane pass occupies residues 1806 to 1828 (SYQVMFFTFFALLAGTAVTIIAY). Residues 1829 to 1886 (HTVCAPRELASPLALTPHASPQHSPHYLASSPTAFNTLPSDRKASPPSGLWSPAYASH) lie on the Cytoplasmic side of the membrane. Residue serine 1839 is modified to Phosphoserine. Threonine 1844 is subject to Phosphothreonine. The interval 1866-1886 (LPSDRKASPPSGLWSPAYASH) is disordered. Phosphoserine occurs at positions 1873, 1876, 1880, and 1885.

This sequence belongs to the NUP210 family. As to quaternary structure, forms dimers and possibly higher-order oligomers. In terms of processing, N-glycosylated, but not all potential glycosylation sites may be used. Contains high-mannose type oligosaccharides. Post-translationally, phosphorylated at Ser-1880 in mitosis specifically; not phosphorylated in interphase.

It localises to the nucleus. The protein localises to the nuclear pore complex. The protein resides in the nucleus membrane. It is found in the endoplasmic reticulum membrane. In terms of biological role, nucleoporin essential for nuclear pore assembly and fusion, nuclear pore spacing, as well as structural integrity. The polypeptide is Nuclear pore membrane glycoprotein 210 (Nup210) (Rattus norvegicus (Rat)).